We begin with the raw amino-acid sequence, 707 residues long: Trans-feruloyl-CoA synthase FCS1 (707 aa).

Residues histidine 267 and 524-535 contribute to the ATP site; that span reads ARAIGYPVVMKA. Residues 498 to 549 enclose the ATP-grasp domain; that stretch reads KELLRPLGIAFPPSQFAANAEAAAAAARAIGYPVVMKAQAAALGHKSDAGGV.

This sequence in the N-terminal section; belongs to the acetate CoA ligase alpha subunit family. The protein in the C-terminal section; belongs to the acetate CoA ligase beta subunit family. In terms of assembly, homodimer.

It catalyses the reaction (E)-ferulate + ATP + CoA = (E)-feruloyl-CoA + ADP + phosphate. Its function is as follows. Catalyzes the formation of feruloyl-CoA, ADP and phosphate from ferulate, CoA and ATP. The sequence is that of Trans-feruloyl-CoA synthase FCS1 from Unknown prokaryotic organism.